Here is a 95-residue protein sequence, read N- to C-terminus: Cell division protein FtsB (95 aa).

Residues 1–3 are Cytoplasmic-facing; sequence MRW. Residues 4–21 traverse the membrane as a helical segment; sequence VLAGLTALLLWLQGLLWF. At 22–95 the chain is on the periplasmic side; that stretch reads GEGGLNDVRG…QIIEREDDAR (74 aa). Residues 26–76 are a coiled coil; the sequence is LNDVRGLSRSVEAQREEVDRLRQRNQALEAEVNDLKTGLEALEERARSELG.

It belongs to the FtsB family. In terms of assembly, part of a complex composed of FtsB, FtsL and FtsQ.

Its subcellular location is the cell inner membrane. Functionally, essential cell division protein. May link together the upstream cell division proteins, which are predominantly cytoplasmic, with the downstream cell division proteins, which are predominantly periplasmic. This chain is Cell division protein FtsB, found in Alkalilimnicola ehrlichii (strain ATCC BAA-1101 / DSM 17681 / MLHE-1).